The primary structure comprises 309 residues: Homoserine O-succinyltransferase (309 aa).

Cys-142 serves as the catalytic Acyl-thioester intermediate. Substrate is bound by residues Lys-163 and Ser-192. His-235 functions as the Proton acceptor in the catalytic mechanism. Residue Glu-237 is part of the active site. Substrate is bound at residue Arg-249.

This sequence belongs to the MetA family.

The protein resides in the cytoplasm. The enzyme catalyses L-homoserine + succinyl-CoA = O-succinyl-L-homoserine + CoA. It functions in the pathway amino-acid biosynthesis; L-methionine biosynthesis via de novo pathway; O-succinyl-L-homoserine from L-homoserine: step 1/1. Functionally, transfers a succinyl group from succinyl-CoA to L-homoserine, forming succinyl-L-homoserine. The polypeptide is Homoserine O-succinyltransferase (Pectobacterium carotovorum subsp. carotovorum (strain PC1)).